A 146-amino-acid chain; its full sequence is Ribonuclease H (146 aa).

An RNase H type-1 domain is found at 1–142 (MNKIIIYTDG…ADALANLAMD (142 aa)). Residues D9, E47, D70, and D134 each contribute to the Mg(2+) site.

It belongs to the RNase H family. In terms of assembly, monomer. Requires Mg(2+) as cofactor.

It is found in the cytoplasm. The catalysed reaction is Endonucleolytic cleavage to 5'-phosphomonoester.. Its function is as follows. Endonuclease that specifically degrades the RNA of RNA-DNA hybrids. The protein is Ribonuclease H of Ruthia magnifica subsp. Calyptogena magnifica.